The chain runs to 131 residues: MSALKYCLLVTGPAYGTQQASSAYQFAQAVVGAGHHLVSIFFYREGVLNANQLTAPASDEFDLVRAWQQLAAEQAVTLNVCVAAALRRGITDQHEAEQLNLAAANLQPGFTLSGLGALAEATLTCDRMVQF.

Cysteine 81 serves as the catalytic Cysteine persulfide intermediate.

This sequence belongs to the DsrE/TusD family. In terms of assembly, heterohexamer, formed by a dimer of trimers. The hexameric TusBCD complex contains 2 copies each of TusB, TusC and TusD. The TusBCD complex interacts with TusE.

It localises to the cytoplasm. Its function is as follows. Part of a sulfur-relay system required for 2-thiolation of 5-methylaminomethyl-2-thiouridine (mnm(5)s(2)U) at tRNA wobble positions. Accepts sulfur from TusA and transfers it in turn to TusE. This Yersinia pseudotuberculosis serotype O:1b (strain IP 31758) protein is Sulfurtransferase TusD.